We begin with the raw amino-acid sequence, 210 residues long: Large ribosomal subunit protein uL3 (210 aa).

The segment at Ala-139–Pro-165 is disordered.

This sequence belongs to the universal ribosomal protein uL3 family. As to quaternary structure, part of the 50S ribosomal subunit. Forms a cluster with proteins L14 and L19.

In terms of biological role, one of the primary rRNA binding proteins, it binds directly near the 3'-end of the 23S rRNA, where it nucleates assembly of the 50S subunit. The protein is Large ribosomal subunit protein uL3 of Maridesulfovibrio salexigens (strain ATCC 14822 / DSM 2638 / NCIMB 8403 / VKM B-1763) (Desulfovibrio salexigens).